Reading from the N-terminus, the 255-residue chain is U2 small nuclear ribonucleoprotein A' (255 aa).

LRR repeat units lie at residues 20–41 (RDRE…GATL), 43–64 (QFDA…PLLR), 65–86 (RLKT…LDQA), and 89–110 (CLTE…DPLA). The 39-residue stretch at 123 to 161 (NPVTNKKHYRLYVIYKVPQVRVLDFQKVKLKERQEAEKM) folds into the LRRCT domain. Lys-172 carries the post-translational modification N6-acetyllysine; alternate. Lys-172 is covalently cross-linked (Glycyl lysine isopeptide (Lys-Gly) (interchain with G-Cter in SUMO2); alternate). Residues Ser-178 and Ser-197 each carry the phosphoserine modification. Positions 179 to 199 (KTFNPGAGLPTDKKKGGPSAG) are disordered. Lys-221 is covalently cross-linked (Glycyl lysine isopeptide (Lys-Gly) (interchain with G-Cter in SUMO2)). A disordered region spans residues 222 to 255 (GLLQSGQIPGRERRSGPSDEGEEEIEDDTVTNGS). 2 positions are modified to phosphoserine: Ser-236 and Ser-255. A compositionally biased stretch (acidic residues) spans 240–255 (DEGEEEIEDDTVTNGS).

The protein belongs to the U2 small nuclear ribonucleoprotein A family. In terms of assembly, identified in the spliceosome B complex. Identified in the spliceosome C complex. Found in a pre-mRNA splicing complex with SFRS4, SFRS5, SNRNP70, SNRPA1, SRRM1 and SRRM2. Found in a pre-mRNA exonic splicing enhancer (ESE) complex with SNRNP70, SNRPA1, SRRM1 and TRA2B. Contributes to the binding of stem loop IV of U2 snRNA with SNRPB2.

The protein resides in the nucleus. In terms of biological role, involved in pre-mRNA splicing as component of the spliceosome. Associated with sn-RNP U2, where it contributes to the binding of stem loop IV of U2 snRNA. This is U2 small nuclear ribonucleoprotein A' (Snrpa1) from Mus musculus (Mouse).